The primary structure comprises 137 residues: uncharacterized protein (137 aa).

It belongs to the ycf72 family.

Its subcellular location is the plastid. It localises to the chloroplast. This is an uncharacterized protein from Zea mays (Maize).